Here is an 863-residue protein sequence, read N- to C-terminus: Glycogen phosphorylase (863 aa).

K618 carries the N6-(pyridoxal phosphate)lysine modification.

The protein belongs to the glycogen phosphorylase family. Pyridoxal 5'-phosphate is required as a cofactor.

It carries out the reaction [(1-&gt;4)-alpha-D-glucosyl](n) + phosphate = [(1-&gt;4)-alpha-D-glucosyl](n-1) + alpha-D-glucose 1-phosphate. Functionally, phosphorylase is an important allosteric enzyme in carbohydrate metabolism. Enzymes from different sources differ in their regulatory mechanisms and in their natural substrates. However, all known phosphorylases share catalytic and structural properties. The polypeptide is Glycogen phosphorylase (glgP) (Mycobacterium tuberculosis (strain ATCC 25618 / H37Rv)).